The chain runs to 562 residues: Vacuolar basic amino acid transporter 1 (562 aa).

Residues 1-30 are Vacuolar-facing; that stretch reads MQTLDETSNLLPPPEEAEAPPLEQKFHEYN. The helical transmembrane segment at 31 to 51 threads the bilayer; that stretch reads LALPKFPILFSLWLGSFLSSL. The Cytoplasmic portion of the chain corresponds to 52-100; sequence DSTIVANIMNRVAEEFSESSKKQWIATSFLLTNTAFQPLYGKLSDITGR. A helical transmembrane segment spans residues 101 to 121; the sequence is KSALLTAQFFFGLGCLLTCFA. Residues 122–131 lie on the Vacuolar side of the membrane; the sequence is RNVTEFSIAR. The N-linked (GlcNAc...) asparagine glycan is linked to Asn-123. A helical transmembrane segment spans residues 132-152; sequence AICGIGAGGLNAISSIAVSDI. Residues 153–166 are Cytoplasmic-facing; that stretch reads CTARERGVYQGYAN. Residues 167 to 187 form a helical membrane-spanning segment; it reads IVFGFGQLLGAPLGGVFIETI. Residues 188-190 lie on the Vacuolar side of the membrane; it reads GWR. The helical transmembrane segment at 191–211 threads the bilayer; it reads ALFGIQVPVIMLCSVLAIKNI. Over 212–232 the chain is Cytoplasmic; that stretch reads NIKLFHVPPMKERYTLKNLSR. Residues 233–253 form a helical membrane-spanning segment; sequence IDIFGSLSLVATISGVLFLCS. At 254–255 the chain is on the vacuolar side; the sequence is SQ. Residues 256–276 form a helical membrane-spanning segment; that stretch reads LNKLYLALFTIGSFIVFILVE. Topologically, residues 277 to 292 are cytoplasmic; the sequence is RYYATEKILPFELLTR. A helical membrane pass occupies residues 293-313; it reads SFCLSSAVTVISSFVVFGEIF. The Vacuolar segment spans residues 314–331; sequence RSPIYLQLLQNISVTKTG. An N-linked (GlcNAc...) asparagine glycan is attached at Asn-324. Residues 332 to 352 form a helical membrane-spanning segment; sequence LFLIFPSISVAVGSLVTGWVL. Over 353–365 the chain is Cytoplasmic; the sequence is RNTKINLAHCAYQ. A helical membrane pass occupies residues 366-386; it reads IIFGGMIMQLLGLGLGYFLLS. Residues 387–419 are Vacuolar-facing; that stretch reads HLNPDYTIYDMLESITFRSNSIWWKLIYVFASV. The helical transmembrane segment at 420–440 threads the bilayer; sequence LVSFGYACLLVATLVSIVFTV. At 441–448 the chain is on the cytoplasmic side; the sequence is EKSQQGTM. The helical transmembrane segment at 449–469 threads the bilayer; the sequence is TGVFYLWRSIGNVLGASLTLV. Topologically, residues 470–528 are vacuolar; it reads SYENSLSSMLWNYMFKTKRDDEYHFTKKQYYSLINDSSYLRGPNFPTDIFVRILDVYKK. Asn-504 is a glycosylation site (N-linked (GlcNAc...) asparagine). Residues 529–549 form a helical membrane-spanning segment; that stretch reads AFLISYIPNIALAAVGIVLSL. At 550–562 the chain is on the cytoplasmic side; sequence YLVKHTYKRSSSS.

This sequence belongs to the major facilitator superfamily.

It localises to the vacuole membrane. Transporter required for vacuolar uptake of at least histidine and lysine. In Saccharomyces cerevisiae (strain ATCC 204508 / S288c) (Baker's yeast), this protein is Vacuolar basic amino acid transporter 1 (VBA1).